Reading from the N-terminus, the 572-residue chain is Hemagglutinin-neuraminidase (572 aa).

Over 1-31 (MEYWKHTNHGKDAGNELETSMATHGNKITNK) the chain is Intravirion. A helical transmembrane segment spans residues 32 to 52 (ITYILWTIILVLLSIVFIIVL). Topologically, residues 53-572 (INSIKSEKAH…FKTEIPKSCS (520 aa)) are virion surface. 2 disulfide bridges follow: cysteine 190/cysteine 214 and cysteine 256/cysteine 269. The involved in neuraminidase activity stretch occupies residues 252–257 (NRKSCS). Asparagine 308 and asparagine 351 each carry an N-linked (GlcNAc...) asparagine; by host glycan. 2 disulfides stabilise this stretch: cysteine 355-cysteine 469 and cysteine 463-cysteine 473. Asparagine 523 carries an N-linked (GlcNAc...) asparagine; by host glycan. The cysteines at positions 535 and 544 are disulfide-linked.

It belongs to the paramyxoviruses hemagglutinin-neuraminidase family. In terms of assembly, homotetramer; composed of disulfide-linked homodimers. Interacts with F protein trimer.

The protein resides in the virion membrane. The protein localises to the host cell membrane. The enzyme catalyses Hydrolysis of alpha-(2-&gt;3)-, alpha-(2-&gt;6)-, alpha-(2-&gt;8)- glycosidic linkages of terminal sialic acid residues in oligosaccharides, glycoproteins, glycolipids, colominic acid and synthetic substrates.. In terms of biological role, attaches the virus to sialic acid-containing cell receptors and thereby initiating infection. Binding of HN protein to the receptor induces a conformational change that allows the F protein to trigger virion/cell membranes fusion. Its function is as follows. Neuraminidase activity ensures the efficient spread of the virus by dissociating the mature virions from the neuraminic acid containing glycoproteins. The protein is Hemagglutinin-neuraminidase (HN) of Human parainfluenza 3 virus (strain Wash/47885/57) (HPIV-3).